A 451-amino-acid polypeptide reads, in one-letter code: Uronate isomerase (451 aa).

The protein belongs to the metallo-dependent hydrolases superfamily. Uronate isomerase family. As to quaternary structure, homotrimer.

The enzyme catalyses D-glucuronate = D-fructuronate. It catalyses the reaction aldehydo-D-galacturonate = keto-D-tagaturonate. The protein operates within carbohydrate metabolism; pentose and glucuronate interconversion. The chain is Uronate isomerase from Thermotoga maritima (strain ATCC 43589 / DSM 3109 / JCM 10099 / NBRC 100826 / MSB8).